The following is a 538-amino-acid chain: Cytochrome P450 monooxygenase flvC (538 aa).

A helical membrane pass occupies residues 17–37 (TVLIAGLLVYWVGSAIFLAVL). C478 serves as a coordination point for heme.

This sequence belongs to the cytochrome P450 family. Requires heme as cofactor.

Its subcellular location is the membrane. The catalysed reaction is pre-flavunoidine + reduced [NADPH--hemoprotein reductase] + O2 = 10-hydroxy-pre-flavunoidine + oxidized [NADPH--hemoprotein reductase] + H2O + H(+). It functions in the pathway secondary metabolite biosynthesis; terpenoid biosynthesis. Functionally, cytochrome P450 monooxygenase; part of the gene cluster that mediates the biosynthesis of flavunoidine, an alkaloidal terpenoid with a tetracyclic cage-like core connected to dimethylcadaverine via a C-N bond and acylated with 5,5-dimethyl-L-pipecolate. The tetracyclic core is synthesized by the terpene cyclase flvE and the cytochrome P450 monooxygenase flvD. The terpene cyclase flvE catalyzes the cyclization of farnesyl pyrophosphate (FPP) to form (1R,4R,5S)-(+)-acoradiene and the cytochrome P450 monooxygenase flvD is then responsible for oxidative conversion of (1R,4R,5S)-(+)-acoradiene into the tetracyclic cage present in the final product flavunoidine. In parallel, the N-methyltransferase flvH dimethylates L-lysine to give N,N-dimethyl-L-Lysin which is decarboxylated by flvG to afford dimethylcadaverine. The terpene cyclase-like protein flvF is the enzyme that attaches the dimethylcadaverine precusor at the C-7 of the tetracyclic cage to yield pre-flavunoidine. The cytochrome monooxygenase flvC hydroxylates the C-10 position of pre-flavunoidine whereas the NRPS flvI acylates the terpenoid core at the hydroxylated C-10 with dimethylpipecolate to yield final flavunoidine. The bifunctional enzyme flvA and the dehydrogenase flvB are responsible for the synthesis of the dimethylpipecolate precursor. The PLP-dependent lyase domain of flvA might use L-O-acetyl-homoserine and alpha-keto-isovalerate to form an intermediary ketone that can cyclize intramolecularly to yield an imine. The imine can be reduced by flvB to yield the 6-carboxylated pipecolate. The C-terminal alpha-KG-dependent oxygenase domain of flvA is then proposed to catalyze the decarboxylation to yield dimethylpipecolate. This Aspergillus flavus (strain ATCC 200026 / FGSC A1120 / IAM 13836 / NRRL 3357 / JCM 12722 / SRRC 167) protein is Cytochrome P450 monooxygenase flvC.